A 360-amino-acid polypeptide reads, in one-letter code: MERVYNFSAGPSILPLPVLEKVQKELVNYNGTGMSIMEMSHRSSYFQSIIDEASNLLRELMNIPNEYDVLFLQGGASLQFSMIPLNLMNTYKKAGYVLTGSWSKKALQEAEKVGEVQVIASSENEKFTTIPKLDGLLGDEKLDYVHITTNNTIEGTKYVDIPRVDKVPLVADMSSNILSERYDVSKFGLIYAGAQKNLGPAGLTIAIIKRDLIGGADRYCPTMLNYETYSKNNSLYNTPPSFSIYVTKLVLEWLKEQGGVSAIEEQNKMKSSLLYNFLDESKLFTSPVDPTYRSLMNIPFTTPSEELNNEFLQKAKERGLVTLKGHRSVGGMRASIYNAMPVQGVQQLVNYMKEFELENR.

Arginine 42 serves as a coordination point for L-glutamate. Pyridoxal 5'-phosphate contacts are provided by residues 76–77, tryptophan 102, threonine 152, aspartate 172, and glutamine 195; that span reads AS. Residue lysine 196 is modified to N6-(pyridoxal phosphate)lysine. 237-238 lines the pyridoxal 5'-phosphate pocket; it reads NT.

It belongs to the class-V pyridoxal-phosphate-dependent aminotransferase family. SerC subfamily. As to quaternary structure, homodimer. Requires pyridoxal 5'-phosphate as cofactor.

It localises to the cytoplasm. The enzyme catalyses O-phospho-L-serine + 2-oxoglutarate = 3-phosphooxypyruvate + L-glutamate. The catalysed reaction is 4-(phosphooxy)-L-threonine + 2-oxoglutarate = (R)-3-hydroxy-2-oxo-4-phosphooxybutanoate + L-glutamate. The protein operates within amino-acid biosynthesis; L-serine biosynthesis; L-serine from 3-phospho-D-glycerate: step 2/3. Catalyzes the reversible conversion of 3-phosphohydroxypyruvate to phosphoserine and of 3-hydroxy-2-oxo-4-phosphonooxybutanoate to phosphohydroxythreonine. In Bacillus cereus (strain ZK / E33L), this protein is Phosphoserine aminotransferase.